The following is a 142-amino-acid chain: Transcription antitermination protein NusB (142 aa).

Belongs to the NusB family. As to quaternary structure, monomer or homodimer; in equilibrium, with a preference for the monomer. Dimerization may be employed to package NusB in an inactive form until recruitment into antitermination complexes.

Functionally, involved in transcription antitermination. Required for transcription of ribosomal RNA (rRNA) genes. Binds specifically to the boxA antiterminator sequence of the ribosomal RNA (rrn) operons. The polypeptide is Transcription antitermination protein NusB (Thermotoga maritima (strain ATCC 43589 / DSM 3109 / JCM 10099 / NBRC 100826 / MSB8)).